The chain runs to 159 residues: Dehydratase GME11372 (159 aa).

Active-site residues include histidine 79 and histidine 104.

This sequence belongs to the scytalone dehydratase family. In terms of assembly, homotrimer. Each subunit contains an active site, located in the central part of the hydrophobic core of the monomer, which functions independently.

It functions in the pathway secondary metabolite biosynthesis. In terms of biological role, dehydratase; part of the gene cluster that mediates the biosynthesis of dibenzodioxocinones such as pestalotiollide B, a novel class of inhibitors against cholesterol ester transfer protein (CEPT). The biosynthesis initiates from condensation of acetate and malonate units catalyzed by the non-reducing PKS pks8/GME11356. Pks8/GME11356 lacks a thioesterase (TE) domain, which is important to the cyclizing of the third ring of atrochrysone carboxylic acid, and the esterase GME11355 might play the role of TE and catalyzes the cyclization reaction of the C ring. The lactamase-like protein GME11357 (or other beta-lactamases in Pestalotiopsis microspora) probably hydrolyzes the thioester bond between the ACP of pks8/GME11356 and the intermediate to release atrochrysone carboxylic acid, which is spontaneously dehydrates to form endocrocin anthrone. Endocrocin anthrone is further converted to emodin via the endocrocin intermediate. Emodin is then oxidized by several enzymes such as the Baeyer-Villiger oxidase GME11358, the oxidoreductase GME11367, the short chain dehydrogenase/reductase GME11373, as well as by other oxidoreductases from the cluster, to modify the A and C rings and open the B ring, and finally yield monodictyphenone. The prenyltransferase GME11375 may catalyze the addition reaction between the C5 side chains and the carbon bone of dibenzodioxocinones. The remaining biochemical reactions to the final product dibenzodioxocinones should be methylation catalyzed by methyltransferase GME11366 and reduction and lactonization reaction catalyzed by a series of oxidordeuctases. In Pestalotiopsis microspora, this protein is Dehydratase GME11372.